Here is a 409-residue protein sequence, read N- to C-terminus: Mitochondrial protein import protein MAS5 (409 aa).

The interval 1–172 (MVKETKFYDI…NGQGIKFVTR (172 aa)) is necessary for HAP1 repression in the absence of heme. The region spanning 4–72 (ETKFYDILGV…RDIYDQFGED (69 aa)) is the J domain. Substrate is bound by residues isoleucine 116 and 135 to 137 (LAL). The CR-type zinc finger occupies 130 to 213 (GRTAKLALNK…CNGKKVENER (84 aa)). Residues cysteine 143, cysteine 146, cysteine 159, cysteine 162, cysteine 185, and cysteine 188 each contribute to the Zn(2+) site. 3 CXXCXGXG motif repeats span residues 143–150 (CKECEGRG), 159–166 (CTSCNGQG), and 185–192 (CDVCHGTG). Residue lysine 198 forms a Glycyl lysine isopeptide (Lys-Gly) (interchain with G-Cter in ubiquitin) linkage. Zn(2+) contacts are provided by cysteine 201 and cysteine 204. One copy of the CXXCXGXG motif repeat lies at 201 to 208 (CKSCNGKK). Residues 215–216 (IL) and 247–249 (VVF) each bind substrate. Residues 382–409 (RTRASRGGANYDSDEEEQGGEGVQCASQ) form a disordered region. A Cysteine methyl ester modification is found at cysteine 406. Cysteine 406 carries S-farnesyl cysteine lipidation. Positions 407-409 (ASQ) are cleaved as a propeptide — removed in mature form.

As to quaternary structure, homodimer. Interacts with HAP1. Component of the HMC including HAP1, SRO9 and YDJ1.

The protein localises to the cytoplasm. The protein resides in the perinuclear region. Probably involved in mitochondrial protein import. Is also required for efficient translocation of pre-pro-alpha-factor. Involved in heme regulation of HAP1, as a component of the high-molecular-weight (HMC) complex. The chain is Mitochondrial protein import protein MAS5 (YDJ1) from Saccharomyces cerevisiae (strain ATCC 204508 / S288c) (Baker's yeast).